The following is a 455-amino-acid chain: Probable cytosolic iron-sulfur protein assembly protein 1 (455 aa).

WD repeat units lie at residues G31–A70, G90–S129, G163–C202, E208–C247, G253–A292, Y318–S365, and H380–T453.

It belongs to the WD repeat CIA1 family.

Its function is as follows. Essential component of the cytosolic iron-sulfur (Fe/S) protein assembly machinery. Required for the maturation of extramitochondrial Fe/S proteins. The chain is Probable cytosolic iron-sulfur protein assembly protein 1 from Mycosarcoma maydis (Corn smut fungus).